Reading from the N-terminus, the 1284-residue chain is MHKKRVEEGEASDFSLAWDSSVTAAGGLEGEPECDQKTSRALEDRNSVTSQEERNEDDEDMEDESIYTCDHCQQDFESLADLTDHRAHRCPGDGDDDPQLSWVASSPSSKDVASPTQMIGDGCDLGLGEEEGGTGLPYPCQFCDKSFIRLSYLKRHEQIHSDKLPFKCTYCSRLFKHKRSRDRHIKLHTGDKKYHCHECEAAFSRSDHLKIHLKTHSSSKPFKCTVCKRGFSSTSSLQSHMQAHKKNKEHLAKSEKEAKKDDFMCDYCEDTFSQTEELEKHVLTRHPQLSEKADLQCIHCPEVFVDENTLLAHIHQAHANQKHKCPMCPEQFSSVEGVYCHLDSHRQPDSSNHSVSPDPVLGSVASMSSATPDSSASVERGSTPDSTLKPLRGQKKMRDDGQGWTKVVYSCPYCSKRDFNSLAVLEIHLKTIHADKPQQSHTCQICLDSMPTLYNLNEHVRKLHKNHAYPVMQFGNISAFHCNYCPEMFADINSLQEHIRVSHCGPNANPSDGNNAFFCNQCSMGFLTESSLTEHIQQAHCSVGSAKLESPVVQPTQSFMEVYSCPYCTNSPIFGSILKLTKHIKENHKNIPLAHSKKSKAEQSPVSSDVEVSSPKRQRLSASANSISNGEYPCNQCDLKFSNFESFQTHLKLHLELLLRKQACPQCKEDFDSQESLLQHLTVHYMTTSTHYVCESCDKQFSSVDDLQKHLLDMHTFVLYHCTLCQEVFDSKVSIQVHLAVKHSNEKKMYRCTACNWDFRKEADLQVHVKHSHLGNPAKAHKCIFCGETFSTEVELQCHITTHSKKYNCKFCSKAFHAIILLEKHLREKHCVFDAATENGTANGVPPMATKKAEPADLQGMLLKNPEAPNSHEASEDDVDASEPMYGCDICGAAYTMEVLLQNHRLRDHNIRPGEDDGSRKKAEFIKGSHKCNVCSRTFFSENGLREHLQTHRGPAKHYMCPICGERFPSLLTLTEHKVTHSKSLDTGTCRICKMPLQSEEEFIEHCQMHPDLRNSLTGFRCVVCMQTVTSTLELKIHGTFHMQKLAGSSAASSPNGQGLQKLYKCALCLKEFRSKQDLVKLDVNGLPYGLCAGCMARSANGQVGGLAPPEPADRPCAGLRCPECSVKFESAEDLESHMQVDHRDLTPETSGPRKGTQTSPVPRKKTYQCIKCQMTFENEREIQIHVANHMIEEGINHECKLCNQMFDSPAKLLCHLIEHSFEGMGGTFKCPVCFTVFVQANKLQQHIFAVHGQEDKIYDCSQCPQKFFFQTELQNHTMSQHAQ.

2 disordered regions span residues 1 to 64 and 87 to 117; these read MHKK…MEDE and AHRC…SPTQ. The segment covering 34 to 46 has biased composition (basic and acidic residues); sequence CDQKTSRALEDRN. Phosphoserine is present on residues Ser47 and Ser50. Acidic residues predominate over residues 54-64; the sequence is RNEDDEDMEDE. The C2H2-type 1; degenerate zinc finger occupies 67–93; the sequence is YTCDHCQQDFESLADLTDHRAHRCPGD. Positions 102 to 117 are enriched in polar residues; it reads WVASSPSSKDVASPTQ. 7 C2H2-type zinc fingers span residues 138–160, 166–188, 194–216, 222–244, 263–286, 295–318, and 323–345; these read YPCQ…EQIH, FKCT…IKLH, YHCH…LKTH, FKCT…MQAH, FMCD…LTRH, LQCI…HQAH, and HKCP…LDSH. Residues 346–398 form a disordered region; the sequence is RQPDSSNHSVSPDPVLGSVASMSSATPDSSASVERGSTPDSTLKPLRGQKKMR. The span at 363-377 shows a compositional bias: low complexity; sequence SVASMSSATPDSSAS. A C2H2-type 9; degenerate zinc finger spans residues 409 to 433; that stretch reads YSCPYCSKRDFNSLAVLEIHLKTIH. C2H2-type zinc fingers lie at residues 441-464, 480-503, and 517-540; these read HTCQ…RKLH, FHCN…RVSH, and FFCN…QQAH. A C2H2-type 13; atypical zinc finger spans residues 563 to 588; it reads YSCPYCTNSPIFGSILKLTKHIKENH. The interval 590-624 is disordered; the sequence is NIPLAHSKKSKAEQSPVSSDVEVSSPKRQRLSASA. Ser604 carries the phosphoserine modification. The segment covering 604–615 has biased composition (low complexity); it reads SPVSSDVEVSSP. 7 consecutive C2H2-type zinc fingers follow at residues 632-654, 662-684, 692-715, 720-743, 750-773, 781-803, and 807-830; these read YPCN…LKLH, QACP…LTVH, YVCE…LDMH, YHCT…AVKH, YRCT…KHSH, HKCI…ITTH, and YNCK…REKH. The C2H2-type 21; degenerate zinc finger occupies 886 to 908; that stretch reads YGCDICGAAYTMEVLLQNHRLRD. 3 C2H2-type zinc fingers span residues 930–952, 959–981, and 1020–1042; these read HKCN…LQTH, YMCP…KVTH, and FRCV…GTFH. Position 1054 is a phosphoserine (Ser1054). The C2H2-type 25; degenerate zinc-finger motif lies at 1064-1082; the sequence is YKCALCLKEFRSKQDLVKL. 5 consecutive C2H2-type zinc fingers follow at residues 1120–1143, 1168–1190, 1198–1220, 1229–1252, and 1259–1282; these read LRCP…QVDH, YQCI…VANH, HECK…LIEH, FKCP…FAVH, and YDCS…MSQH. Over residues 1136–1147 the composition is skewed to basic and acidic residues; the sequence is ESHMQVDHRDLT. The disordered stretch occupies residues 1136–1163; that stretch reads ESHMQVDHRDLTPETSGPRKGTQTSPVP.

This sequence belongs to the krueppel C2H2-type zinc-finger protein family. In terms of assembly, homodimer. Interacts with EBF1. Interacts with SMAD1 and SMAD4. Interacts with PARP1. Interacts with CEP290. As to expression, expressed in brain, lung, skeletal muscle, heart, pancreas and kidney but not liver or placenta. Also expressed in aorta, ovary, pituitary, small intestine, fetal brain, fetal kidney and, within the adult brain, in the substantia nigra, medulla, amygdala, thalamus and cerebellum.

It is found in the nucleus. In terms of biological role, transcription factor that can both act as an activator or a repressor depending on the context. Plays a central role in BMP signaling and olfactory neurogenesis. Associates with SMADs in response to BMP2 leading to activate transcription of BMP target genes. Acts as a transcriptional repressor via its interaction with EBF1, a transcription factor involved in terminal olfactory receptor neurons differentiation; this interaction preventing EBF1 to bind DNA and activate olfactory-specific genes. Involved in olfactory neurogenesis by participating in a developmental switch that regulates the transition from differentiation to maturation in olfactory receptor neurons. Controls proliferation and differentiation of neural precursors in cerebellar vermis formation. This Homo sapiens (Human) protein is Zinc finger protein 423 (ZNF423).